A 108-amino-acid polypeptide reads, in one-letter code: uncharacterized protein (108 aa).

Residues 1 to 23 (MVDELEKNQVQPQETEENKENAL) form a disordered region.

This is an uncharacterized protein from Ureaplasma parvum serovar 3 (strain ATCC 700970).